Reading from the N-terminus, the 196-residue chain is uncharacterized protein (196 aa).

Belongs to the flavoredoxin family. FMN serves as cofactor.

This is an uncharacterized protein from Aquifex aeolicus (strain VF5).